We begin with the raw amino-acid sequence, 165 residues long: NADH-quinone oxidoreductase subunit I (165 aa).

2 consecutive 4Fe-4S ferredoxin-type domains span residues 66–98 (HRLTKNEKGDLKCVACDMCATACPANCIFITAT) and 109–138 (SKFTIDLLECVFCGLCVEACPKDAIRMDTG). Residues Cys78, Cys81, Cys84, Cys88, Cys118, Cys121, Cys124, and Cys128 each contribute to the [4Fe-4S] cluster site.

It belongs to the complex I 23 kDa subunit family. As to quaternary structure, NDH-1 is composed of 14 different subunits. Subunits NuoA, H, J, K, L, M, N constitute the membrane sector of the complex. The cofactor is [4Fe-4S] cluster.

The protein resides in the cell inner membrane. The enzyme catalyses a quinone + NADH + 5 H(+)(in) = a quinol + NAD(+) + 4 H(+)(out). Its function is as follows. NDH-1 shuttles electrons from NADH, via FMN and iron-sulfur (Fe-S) centers, to quinones in the respiratory chain. The immediate electron acceptor for the enzyme in this species is believed to be ubiquinone. Couples the redox reaction to proton translocation (for every two electrons transferred, four hydrogen ions are translocated across the cytoplasmic membrane), and thus conserves the redox energy in a proton gradient. In Campylobacter fetus subsp. fetus (strain 82-40), this protein is NADH-quinone oxidoreductase subunit I.